Here is a 294-residue protein sequence, read N- to C-terminus: Pyridoxal 5'-phosphate synthase subunit PdxS (294 aa).

D24 provides a ligand contact to D-ribose 5-phosphate. The active-site Schiff-base intermediate with D-ribose 5-phosphate is K81. Position 153 (G153) interacts with D-ribose 5-phosphate. R165 contacts D-glyceraldehyde 3-phosphate. D-ribose 5-phosphate is bound by residues G214 and G235–S236.

The protein belongs to the PdxS/SNZ family. As to quaternary structure, in the presence of PdxT, forms a dodecamer of heterodimers.

It carries out the reaction aldehydo-D-ribose 5-phosphate + D-glyceraldehyde 3-phosphate + L-glutamine = pyridoxal 5'-phosphate + L-glutamate + phosphate + 3 H2O + H(+). It functions in the pathway cofactor biosynthesis; pyridoxal 5'-phosphate biosynthesis. Its function is as follows. Catalyzes the formation of pyridoxal 5'-phosphate from ribose 5-phosphate (RBP), glyceraldehyde 3-phosphate (G3P) and ammonia. The ammonia is provided by the PdxT subunit. Can also use ribulose 5-phosphate and dihydroxyacetone phosphate as substrates, resulting from enzyme-catalyzed isomerization of RBP and G3P, respectively. The sequence is that of Pyridoxal 5'-phosphate synthase subunit PdxS from Geobacillus thermodenitrificans (strain NG80-2).